Reading from the N-terminus, the 162-residue chain is MHLADLIETTLSGMGYELVELERAPAGLLRVYIDQPETGIAIEDCEKVSRQLTHVFTVENVDYERLEVSSPGLDRPLKKLADFVRFAGAEARVTLRLPVNGQKNFTGILREPTGAAGEEKIGLEFEGKDGPALLEFAVSDVDKARLVPVIDFKGNQRKGNKQ.

It belongs to the RimP family.

It localises to the cytoplasm. In terms of biological role, required for maturation of 30S ribosomal subunits. The sequence is that of Ribosome maturation factor RimP from Cupriavidus taiwanensis (strain DSM 17343 / BCRC 17206 / CCUG 44338 / CIP 107171 / LMG 19424 / R1) (Ralstonia taiwanensis (strain LMG 19424)).